The sequence spans 426 residues: MNQLRLEPIEKVNGTINIPGSKSISNRALLLATLAEGTTTLTNLLDSDDIRYMLASLKQLGVNYRLTNNNTVCEVDGIAGVLNADTAQTLFLGNAGTAMRPLCAALTLGQGEFTLTGEPRMEERPIGDLVDSLRQLGADVSYLKNDGFPPLTINATGLSGGDVEIAGDLSSQFLTALLMVAPLAKGDVNIKIKGELVSKPYIDITLALMAQFGVNVTNNNYVSFEIKTGQRYISPGKLLVEGDASSASYFLAAGAIKGGEVKVTGVGKLSIQGDVKFADVLAQMGADIEWGDDYIIARGSKLNAVDLDMNHIPDAAMTIATAALFATGTTHIRNIYNWRIKETDRLAAMATELRKVGAIVDEGHDYISVTPPVKPHTANIDTYNDHRMAMCFSMLAFADCGITINEPECTSKTFPDYFTQFNALAN.

Residues lysine 22, serine 23, and arginine 27 each contribute to the 3-phosphoshikimate site. A phosphoenolpyruvate-binding site is contributed by lysine 22. Phosphoenolpyruvate is bound by residues glycine 96 and arginine 124. The 3-phosphoshikimate site is built by serine 170, serine 171, glutamine 172, serine 198, aspartate 314, asparagine 337, and lysine 341. Glutamine 172 contacts phosphoenolpyruvate. Catalysis depends on aspartate 314, which acts as the Proton acceptor. 3 residues coordinate phosphoenolpyruvate: arginine 345, arginine 387, and lysine 412.

The protein belongs to the EPSP synthase family. In terms of assembly, monomer.

It is found in the cytoplasm. The enzyme catalyses 3-phosphoshikimate + phosphoenolpyruvate = 5-O-(1-carboxyvinyl)-3-phosphoshikimate + phosphate. The protein operates within metabolic intermediate biosynthesis; chorismate biosynthesis; chorismate from D-erythrose 4-phosphate and phosphoenolpyruvate: step 6/7. In terms of biological role, catalyzes the transfer of the enolpyruvyl moiety of phosphoenolpyruvate (PEP) to the 5-hydroxyl of shikimate-3-phosphate (S3P) to produce enolpyruvyl shikimate-3-phosphate and inorganic phosphate. In Shewanella piezotolerans (strain WP3 / JCM 13877), this protein is 3-phosphoshikimate 1-carboxyvinyltransferase.